We begin with the raw amino-acid sequence, 211 residues long: Large ribosomal subunit protein uL3 (211 aa).

Position 150 is an N5-methylglutamine (glutamine 150).

It belongs to the universal ribosomal protein uL3 family. Part of the 50S ribosomal subunit. Forms a cluster with proteins L14 and L19. In terms of processing, methylated by PrmB.

Functionally, one of the primary rRNA binding proteins, it binds directly near the 3'-end of the 23S rRNA, where it nucleates assembly of the 50S subunit. This is Large ribosomal subunit protein uL3 from Pseudomonas entomophila (strain L48).